We begin with the raw amino-acid sequence, 1161 residues long: Cell wall protein DAN4 (1161 aa).

The N-terminal stretch at 1–19 (MVNISIVAGIVALATSAAA) is a signal peptide. Disordered stretches follow at residues 123–309 (TSTS…SASS), 326–345 (TPAT…STTN), 354–547 (TTTS…SSFG), and 691–713 (STDS…SSTA). A 46 X 3 AA tandem repeats of T-[SP]-T region spans residues 134 to 286 (TSTTPTTTIT…TTSTTSTTST (153 aa)). Over residues 354–372 (TTTSDTYISSSSPSQVTSS) the composition is skewed to low complexity. 14 consecutive repeat copies span residues 373 to 384 (AEPTTVSEVTSS), 385 to 396 (VEPTRSSQVTSS), 397 to 408 (AEPTTVSEFTSS), 409 to 420 (VEPTRSSQVTSS), 421 to 432 (AEPTTVSEFTSS), 433 to 444 (VEPTRSSQVTSS), 445 to 456 (AEPTTVSEFTSS), 457 to 468 (VEPTRSSQVTSS), 469 to 480 (AEPTTVSEFTSS), 481 to 492 (VEPTRSSQVTSS), 493 to 504 (AEPTTVSEFTSS), 505 to 516 (VEPIRSSQVTSS), 517 to 528 (AEPTTVSEVTSS), and 529 to 540 (VEPIRSSQVTTT). The segment at 373–540 (AEPTTVSEVT…PIRSSQVTTT (168 aa)) is 14 X 12 AA approximate tandem repeats. The span at 373-547 (AEPTTVSEVT…TTTEPVSSFG (175 aa)) shows a compositional bias: polar residues. 2 consecutive repeat copies span residues 826-913 (EDSV…EDNE) and 914-1001 (EDIT…EDNE). The interval 826 to 1040 (EDSVLTKTQV…SPVSSFNSKA (215 aa)) is 2.5 X 88 AA approximate tandem repeats. The 2-3; truncated repeat unit spans residues 1002-1040 (EDVASTKTELLTMETTITSCSGGICTTLMSPVSSFNSKA). Asn-1137 carries the GPI-anchor amidated asparagine lipid modification. A propeptide spans 1138–1161 (GAYNFDKDNIFGTAIVAVVALLLL) (removed in mature form).

Belongs to the SRP1/TIP1 family. In terms of processing, extensively O-glycosylated. The GPI-anchor is attached to the protein in the endoplasmic reticulum and serves to target the protein to the cell surface. There, the glucosamine-inositol phospholipid moiety is cleaved off and the GPI-modified mannoprotein is covalently attached via its lipidless GPI glycan remnant to the 1,6-beta-glucan of the outer cell wall layer.

Its subcellular location is the secreted. It is found in the cell wall. It localises to the cell membrane. In terms of biological role, component of the cell wall. The protein is Cell wall protein DAN4 of Saccharomyces cerevisiae (strain ATCC 204508 / S288c) (Baker's yeast).